The chain runs to 325 residues: Brain mitochondrial carrier protein 1 (325 aa).

Transmembrane regions (helical) follow at residues 38 to 54 (GLNW…SIVA), 112 to 128 (LRQA…YQSL), 145 to 165 (MICG…TDVL), 199 to 215 (GVVP…GVEL), 240 to 256 (VSSF…SNPV), and 298 to 315 (GFWP…IFFI). 3 Solcar repeats span residues 42–131 (KPFV…LKRL), 139–224 (ETLL…TKKH), and 233–323 (DTIL…LKRL).

The protein belongs to the mitochondrial carrier (TC 2.A.29) family. Homotetramer. In terms of tissue distribution, mainly expressed in brain, particularly abundant in cortex, hippocampus thalamus, amygdala and hypothalamus. Highly expressed in heart and kidney, but not liver or lung (at protein level). In the nervous system, expressed in cortex, basal ganglia, substantia nigra, cerebellum, and spinal cord (at protein level).

The protein localises to the mitochondrion inner membrane. It catalyses the reaction sulfite(in) + sulfate(out) = sulfite(out) + sulfate(in). The catalysed reaction is thiosulfate(in) + sulfate(out) = thiosulfate(out) + sulfate(in). The enzyme catalyses sulfate(out) + phosphate(in) = sulfate(in) + phosphate(out). It carries out the reaction oxalate(in) + sulfate(out) = oxalate(out) + sulfate(in). It catalyses the reaction malonate(in) + sulfate(out) = malonate(out) + sulfate(in). The catalysed reaction is maleate(in) + sulfate(out) = maleate(out) + sulfate(in). The enzyme catalyses (S)-malate(in) + sulfate(out) = (S)-malate(out) + sulfate(in). It carries out the reaction (3S)-citramalate(in) + sulfate(out) = (3S)-citramalate(out) + sulfate(in). It catalyses the reaction (3R)-citramalate(in) + sulfate(out) = (3R)-citramalate(out) + sulfate(in). The catalysed reaction is sulfate(out) + succinate(in) = sulfate(in) + succinate(out). The enzyme catalyses (S,S)-tartrate(in) + sulfate(out) = (S,S)-tartrate(out) + sulfate(in). It carries out the reaction (2R,3R)-tartrate(in) + sulfate(out) = (2R,3R)-tartrate(out) + sulfate(in). It catalyses the reaction D-aspartate(in) + sulfate(out) = D-aspartate(out) + sulfate(in). The catalysed reaction is L-aspartate(in) + sulfate(out) = L-aspartate(out) + sulfate(in). The enzyme catalyses sulfate(in) = sulfate(out). It carries out the reaction phosphate(in) = phosphate(out). It catalyses the reaction (S)-malate(out) = (S)-malate(in). The catalysed reaction is citrate(in) = citrate(out). The enzyme catalyses L-aspartate(out) = L-aspartate(in). It carries out the reaction L-glutamate(out) = L-glutamate(in). It catalyses the reaction H(+)(in) = H(+)(out). The catalysed reaction is chloride(in) = chloride(out). Functionally, transports inorganic anions (sulfate, sulfite, thiosulfate and phosphate) and, to a lesser extent, a variety of dicarboxylates (e.g. malonate, malate and citramalate) and, even more so, aspartate and glutamate and tricarboxylates. May catalyze the export of sulfite and thiosulfate (the hydrogen sulfide degradation products) from the mitochondria, thereby modulating the level of the hydrogen sulfide. Also can mediate a very low unidirectional transport of anions including sulfate, phosphate, (S)-malate, citrate, L-aspartate and L-glutamate. Maintains oxidative balance (through uncoupling activities) and ATP production (by modifying mitochondrial membrane potential). Is able to transport protons across lipid membranes. Also exhibits transmembrane chloride transport activity to a lesser extent. May modify mitochondrial respiratory efficiency and mitochondrial oxidant production. This is Brain mitochondrial carrier protein 1 from Mus musculus (Mouse).